We begin with the raw amino-acid sequence, 480 residues long: Glutarate-semialdehyde dehydrogenase (480 aa).

NADP(+) contacts are provided by residues 156–157 (WN), 180–183 (KPAS), and 233–234 (GS). The active-site Proton acceptor is the Glu255. NADP(+) is bound at residue Leu256. Catalysis depends on Cys289, which acts as the Nucleophile. Glu384 contributes to the NADP(+) binding site.

It belongs to the aldehyde dehydrogenase family.

It carries out the reaction 5-oxopentanoate + NADP(+) + H2O = glutarate + NADPH + 2 H(+). Its pathway is amino-acid degradation. In terms of biological role, catalyzes the conversion of 5-oxopentanoate (glutarate semialdehyde) to glutarate. Involved in L-lysine degradation. In Pseudomonas putida (strain ATCC 47054 / DSM 6125 / CFBP 8728 / NCIMB 11950 / KT2440), this protein is Glutarate-semialdehyde dehydrogenase.